The primary structure comprises 235 residues: Acyl-protein thioesterase 1 (235 aa).

Catalysis depends on charge relay system residues serine 119, aspartate 172, and histidine 206.

The protein belongs to the AB hydrolase superfamily. AB hydrolase 2 family.

It is found in the cytoplasm. It localises to the nucleus. It catalyses the reaction S-hexadecanoyl-L-cysteinyl-[protein] + H2O = L-cysteinyl-[protein] + hexadecanoate + H(+). Hydrolyzes fatty acids from S-acylated cysteine residues in proteins with a strong preference for palmitoylated G-alpha proteins over other acyl substrates. Mediates the deacylation of G-alpha proteins such as GPA1 in vivo, but has weak or no activity toward palmitoylated Ras proteins. Has weak lysophospholipase activity in vitro; however such activity may not exist in vivo. The protein is Acyl-protein thioesterase 1 of Eremothecium gossypii (strain ATCC 10895 / CBS 109.51 / FGSC 9923 / NRRL Y-1056) (Yeast).